Consider the following 388-residue polypeptide: Venom acid phosphatase Acph-1 (388 aa).

An N-terminal signal peptide occupies residues 1 to 15; the sequence is MSVIAILAMVVGVQA. The active-site Nucleophile is the His26. 2 disulfides stabilise this stretch: Cys145/Cys355 and Cys330/Cys334. N-linked (GlcNAc...) asparagine glycosylation is found at Asn182 and Asn228. Glu273 (proton donor) is an active-site residue. N-linked (GlcNAc...) asparagine glycosylation is present at Asn366.

Belongs to the histidine acid phosphatase family. Expressed by the venom gland.

It localises to the secreted. It catalyses the reaction a phosphate monoester + H2O = an alcohol + phosphate. This Apis mellifera (Honeybee) protein is Venom acid phosphatase Acph-1.